The chain runs to 905 residues: Microtubule-associated protein 10 (905 aa).

7 disordered regions span residues 30 to 51 (AAAV…SSPR), 199 to 235 (TRTG…KPLG), 329 to 362 (APEE…AHEH), 434 to 458 (SPES…GGCE), 547 to 586 (SSAE…FDEP), 721 to 772 (RSFK…GSPV), and 786 to 855 (KSLE…SSYL). Residues 34–43 (EQEEEEEEKE) show a composition bias toward acidic residues. The segment covering 208-227 (SPQTQQERQQLQQPASQPSP) has biased composition (low complexity). Residues 443-453 (CRSEAKKDKRS) are compositionally biased toward basic and acidic residues. Residues 567-579 (ASFTENSDTSRQI) are compositionally biased toward polar residues. Basic and acidic residues predominate over residues 721–736 (RSFKAHDSSSRTENPK). The span at 737 to 748 (HSQYTSKSSDTG) shows a compositional bias: polar residues. Residues 790-801 (EASSISASDLSS) are compositionally biased toward low complexity. Residues 830–855 (SVKTRSSWKSLEKSQSPQTSQVSSYL) are compositionally biased toward polar residues.

Interacts (via middle region) with microtubules. Expressed in different cell lines (at protein level).

The protein resides in the cytoplasm. The protein localises to the cytoskeleton. It is found in the spindle pole. It localises to the microtubule organizing center. Its subcellular location is the centrosome. The protein resides in the midbody. In terms of biological role, microtubule-associated protein (MAP) that plays a role in the regulation of cell division; promotes microtubule stability and participates in the organization of the spindle midzone and normal progress of cytokinesis. The chain is Microtubule-associated protein 10 (MAP10) from Homo sapiens (Human).